A 395-amino-acid chain; its full sequence is MYSLTNAQKDLQLKARDLAQCAFAPTAANTDVTEAYPWANVDRLLTEGFMGMTIPKEYGGQGRSYHDTVIVIEEMAKACATMGRITVEANMGAIGAIMNYGTEEQKKIAAAAVLSGDKPAICISEPNAGSAASEMTTRADRKGDRYILNGEKYWITGGGVSRLHLIFARVFDDGVDQGICAFICVREGNSPENLVVGRRLYAMGVRGIPETHLEFRDLQVHKSMLVVPPGGLKRGFASLMNAYNAQRVGAGTVALGIAQGAFEEAVTYAKERQQFGRPIAEFQGLQWMISDMSIQLEAARLLLHAAACSGESFPDIAMAARAKIFAAETANKVTNDSLQIYGSSGYGRHNPMERHVRDARMFTIAGGTAQILRTQVAGSILDMKLPQTRGGFLPK.

FAD contacts are provided by residues 121 to 124 (ICIS), serine 130, and 153 to 156 (YWIT). 243 to 244 (YN) is a binding site for substrate. Residues arginine 272, glutamine 339, serine 343, 366 to 370 (GGTAQ), and glutamine 387 each bind FAD.

Belongs to the acyl-CoA dehydrogenase family. Homotrimer or homotetramer. FAD is required as a cofactor.

It carries out the reaction 3-sulfinopropanoyl-CoA + H2O = propanoyl-CoA + sulfite + H(+). Functionally, catalyzes the conversion 3-sulfinopropanoyl-CoA (3SP-CoA) to propanoyl-CoA by abstraction of sulfite. Does not show dehydrogenase activity. This chain is 3-sulfinopropanoyl-CoA desulfinase, found in Cupriavidus necator (strain ATCC 43291 / DSM 13513 / CCUG 52238 / LMG 8453 / N-1) (Ralstonia eutropha).